Reading from the N-terminus, the 348-residue chain is Chaperone protein DnaJ (348 aa).

One can recognise a J domain in the interval D3 to V65. Residues G109–P191 form a CR-type zinc finger. Zn(2+) contacts are provided by C122, C125, C139, C142, C165, C168, C179, and C182. CXXCXGXG motif repeat units follow at residues C122–R129, C139–G146, C165–G172, and C179–G186.

It belongs to the DnaJ family. In terms of assembly, homodimer. Zn(2+) serves as cofactor.

It localises to the cytoplasm. Its function is as follows. Participates actively in the response to hyperosmotic and heat shock by preventing the aggregation of stress-denatured proteins and by disaggregating proteins, also in an autonomous, DnaK-independent fashion. Unfolded proteins bind initially to DnaJ; upon interaction with the DnaJ-bound protein, DnaK hydrolyzes its bound ATP, resulting in the formation of a stable complex. GrpE releases ADP from DnaK; ATP binding to DnaK triggers the release of the substrate protein, thus completing the reaction cycle. Several rounds of ATP-dependent interactions between DnaJ, DnaK and GrpE are required for fully efficient folding. Also involved, together with DnaK and GrpE, in the DNA replication of plasmids through activation of initiation proteins. The polypeptide is Chaperone protein DnaJ (Tropheryma whipplei (strain Twist) (Whipple's bacillus)).